The primary structure comprises 179 residues: Large ribosomal subunit protein uL5 (179 aa).

This sequence belongs to the universal ribosomal protein uL5 family. As to quaternary structure, part of the 50S ribosomal subunit; part of the 5S rRNA/L5/L18/L25 subcomplex. Contacts the 5S rRNA and the P site tRNA. Forms a bridge to the 30S subunit in the 70S ribosome.

Its function is as follows. This is one of the proteins that bind and probably mediate the attachment of the 5S RNA into the large ribosomal subunit, where it forms part of the central protuberance. In the 70S ribosome it contacts protein S13 of the 30S subunit (bridge B1b), connecting the 2 subunits; this bridge is implicated in subunit movement. Contacts the P site tRNA; the 5S rRNA and some of its associated proteins might help stabilize positioning of ribosome-bound tRNAs. The protein is Large ribosomal subunit protein uL5 of Bordetella petrii (strain ATCC BAA-461 / DSM 12804 / CCUG 43448).